The chain runs to 407 residues: 5-aminolevulinate synthase 1 (407 aa).

Positions 21, 137, and 156 each coordinate substrate. S189, H217, and T245 together coordinate pyridoxal 5'-phosphate. Residue K248 is part of the active site. K248 carries the post-translational modification N6-(pyridoxal phosphate)lysine. 2 residues coordinate pyridoxal 5'-phosphate: S277 and T278. Substrate is bound at residue T363.

This sequence belongs to the class-II pyridoxal-phosphate-dependent aminotransferase family. In terms of assembly, homodimer. Requires pyridoxal 5'-phosphate as cofactor.

It catalyses the reaction succinyl-CoA + glycine + H(+) = 5-aminolevulinate + CO2 + CoA. It functions in the pathway porphyrin-containing compound metabolism; protoporphyrin-IX biosynthesis; 5-aminolevulinate from glycine: step 1/1. The sequence is that of 5-aminolevulinate synthase 1 (hemA) from Cereibacter sphaeroides (strain ATCC 17023 / DSM 158 / JCM 6121 / CCUG 31486 / LMG 2827 / NBRC 12203 / NCIMB 8253 / ATH 2.4.1.) (Rhodobacter sphaeroides).